Here is a 20-residue protein sequence, read N- to C-terminus: Unknown protein NF009 from 2D-PAGE (20 aa).

A disordered region spans residues 1 to 20 (ATSAAQGAALDESVRKVLKP).

This is Unknown protein NF009 from 2D-PAGE from Naegleria fowleri (Brain eating amoeba).